A 340-amino-acid chain; its full sequence is 4-hydroxythreonine-4-phosphate dehydrogenase (340 aa).

Positions 141 and 142 each coordinate substrate. A divalent metal cation-binding residues include His171, His216, and His271. Residues Lys279, Asn288, and Arg297 each coordinate substrate.

The protein belongs to the PdxA family. Homodimer. Zn(2+) serves as cofactor. The cofactor is Mg(2+). It depends on Co(2+) as a cofactor.

The protein resides in the cytoplasm. It catalyses the reaction 4-(phosphooxy)-L-threonine + NAD(+) = 3-amino-2-oxopropyl phosphate + CO2 + NADH. Its pathway is cofactor biosynthesis; pyridoxine 5'-phosphate biosynthesis; pyridoxine 5'-phosphate from D-erythrose 4-phosphate: step 4/5. Catalyzes the NAD(P)-dependent oxidation of 4-(phosphooxy)-L-threonine (HTP) into 2-amino-3-oxo-4-(phosphooxy)butyric acid which spontaneously decarboxylates to form 3-amino-2-oxopropyl phosphate (AHAP). This chain is 4-hydroxythreonine-4-phosphate dehydrogenase, found in Desulforapulum autotrophicum (strain ATCC 43914 / DSM 3382 / VKM B-1955 / HRM2) (Desulfobacterium autotrophicum).